A 503-amino-acid chain; its full sequence is ATP synthase subunit alpha, chloroplastic (503 aa).

170–177 provides a ligand contact to ATP; sequence GDRQTGKT.

This sequence belongs to the ATPase alpha/beta chains family. F-type ATPases have 2 components, CF(1) - the catalytic core - and CF(0) - the membrane proton channel. CF(1) has five subunits: alpha(3), beta(3), gamma(1), delta(1), epsilon(1). CF(0) has four main subunits: a, b, b' and c.

Its subcellular location is the plastid. The protein localises to the chloroplast thylakoid membrane. It carries out the reaction ATP + H2O + 4 H(+)(in) = ADP + phosphate + 5 H(+)(out). Its function is as follows. Produces ATP from ADP in the presence of a proton gradient across the membrane. The alpha chain is a regulatory subunit. The sequence is that of ATP synthase subunit alpha, chloroplastic from Gracilaria tenuistipitata var. liui (Red alga).